The chain runs to 70 residues: Movement protein TGBp3 (70 aa).

Residues Met-1–Gly-4 are Lumenal-facing. Residues Ala-5 to Thr-27 form a helical membrane-spanning segment. The Cytoplasmic segment spans residues Arg-28 to Gln-70.

It belongs to the Tymovirales TGBp3 protein family.

It localises to the host endoplasmic reticulum membrane. Its function is as follows. Plays a role in viral cell-to-cell propagation, by facilitating genome transport to neighboring plant cells through plasmosdesmata. May induce the formation of granular vesicles derived from the Endoplasmic reticulum, which align on actin filaments. In Potato virus X (strain CP) (PVX), this protein is Movement protein TGBp3.